A 1002-amino-acid polypeptide reads, in one-letter code: MDSNADISARRVSGMDWLWLVCFFHLVTSLEEILLDTTGETSEIGWTSHPPDGWEEVSVRDDKERQIRTFQVCNMDEPGQNNWLRTHFIERRGAHRVHVRLHFSVRDCASMRTVASTCKETFTLYYHQSDVDIASQELPEWHEGPWTKVDTIAADESFSQVDRTGKVVRMNVKVRSFGPLTKHGFYLAFQDSGACMSLVAVQVFFYKCPAVVKGFASFPETFAGGERTSLVESLGTCVANAEEASTTGSSGVRLHCNGEGEWMVATGRCSCKAGYQSVDNEQACQACPIGSFKASVGDDPCLLCPAHSHAPLPLPGSIECVCQSHYYRSASDNSDAPCTGIPSAPRDLSYEIVGSNVLLTWRLPKDLGGRKDVFFNVICKECPTRSAGTCVRCGDNVQFEPRQVGLTESRVQVSNLLARVQYTFEIQAVNLVTELSSEAPQYATINVSTSQSVPSAIPMMHQVSRATSSITLSWPQPDQPNGVILDYQLRYFDKAEDEDNSFTLTSETNMATILNLSPGKIYVFQVRARTAVGYGPYSGKMYFQTLMAGEHSEMAQDRLPLIVGSALGGLAFLVIAAIAILAIIFKSKRRETPYTDRLQQYISTRGLGVKYYIDPSTYEDPNEAIREFAKEIDVSFIKIEEVIGSGEFGEVCFGRLKHPGKREYTVAIKTLKSGYTDEQRREFLSEASIMGQFEHPNVIHLEGVVTKSRPVMIVTEFMENGSLDSFLRQKEGQFSVLQLVGMLRGIAAGMRYLSDMNYVHRDLAARNILVNSNLVCKVSDFGLSRFLEDDASNPTYTGALGCKIPIRWTAPEAVQYRKFTSSSDVWSYGIVMWEVMSYGERPYWDMSNQDVINAIDQDYRLPPPPDCPTVLHLLMLDCWQKDRVQRPKFEQIVSALDKMIRKPSALKATGTGSSRPSQPLLSNSPPDFPSLSNAHEWLDAIKMGRYKENFDQAGLITFDVISRMTLEDLQRIGITLVGHQKKILNSIQLMKVHLNQLEPVEV.

The N-terminal stretch at 1-29 (MDSNADISARRVSGMDWLWLVCFFHLVTS) is a signal peptide. Topologically, residues 30 to 564 (LEEILLDTTG…AQDRLPLIVG (535 aa)) are extracellular. An Eph LBD domain is found at 31-213 (EEILLDTTGE…FFYKCPAVVK (183 aa)). 2 consecutive Fibronectin type-III domains span residues 344 to 452 (APRD…TSQS) and 453 to 548 (VPSA…TLMA). A glycan (N-linked (GlcNAc...) asparagine) is linked at Asn-446. A helical transmembrane segment spans residues 565–585 (SALGGLAFLVIAAIAILAIIF). The Cytoplasmic segment spans residues 586–1002 (KSKRRETPYT…HLNQLEPVEV (417 aa)). The Protein kinase domain maps to 637–900 (IKIEEVIGSG…QIVSALDKMI (264 aa)). Residues 643 to 651 (IGSGEFGEV) and Lys-669 each bind ATP. Asp-762 acts as the Proton acceptor in catalysis. Positions 906-928 (LKATGTGSSRPSQPLLSNSPPDF) are disordered. A compositionally biased stretch (polar residues) spans 910 to 928 (GTGSSRPSQPLLSNSPPDF). Residues 929–993 (PSLSNAHEWL…LNSIQLMKVH (65 aa)) enclose the SAM domain. A PDZ-binding motif is present at residues 1000-1002 (VEV).

Belongs to the protein kinase superfamily. Tyr protein kinase family. Ephrin receptor subfamily. In terms of tissue distribution, most abundant in thymus and detectable in brain, retina, kidney, lung and heart. Not detected in skeletal muscle and liver.

The protein resides in the membrane. The catalysed reaction is L-tyrosyl-[protein] + ATP = O-phospho-L-tyrosyl-[protein] + ADP + H(+). In terms of biological role, receptor for members of the ephrin-B family. In Gallus gallus (Chicken), this protein is Ephrin type-B receptor 5 (EPHB5).